Here is a 141-residue protein sequence, read N- to C-terminus: Cystatin (141 aa).

The first 26 residues, Met1–Met26, serve as a signal peptide directing secretion. Residues Gly29–Trp129 enclose the Cystatin domain. A Secondary area of contact motif is present at residues Gln73–Gly77. Disulfide bonds link Cys91-Cys107 and Cys120-Cys140.

It belongs to the cystatin family. Expressed at a low level by the venom gland (at protein level).

Its subcellular location is the secreted. Inhibits various C1 cysteine proteases including cathepsin L, papain and cathepsin B. This protein has no toxic activity and its function in the venom is unknown. It may play a role as a housekeeping or regulatory protein. The polypeptide is Cystatin (Pseudechis australis (Mulga snake)).